The primary structure comprises 329 residues: Glucosyl-3-phosphoglycerate synthase (329 aa).

UDP-alpha-D-glucose contacts are provided by residues 55–59 (PALDE), Ser-86, Lys-119, and 139–141 (DSD). Mn(2+) is bound at residue Asp-141. 189–192 (GRVT) is a (2R)-3-phosphoglycerate binding site. 234–237 (YGVE) provides a ligand contact to UDP-alpha-D-glucose. His-263 lines the Mn(2+) pocket. Asn-265 is a binding site for (2R)-3-phosphoglycerate.

It belongs to the glycosyltransferase 2 family. Homodimer. Mg(2+) serves as cofactor. The cofactor is Mn(2+).

It catalyses the reaction an NDP-alpha-D-glucose + (2R)-3-phosphoglycerate = (2R)-2-O-(alpha-D-glucopyranosyl)-3-phospho-glycerate + a ribonucleoside 5'-diphosphate + H(+). The enzyme catalyses (2R)-3-phosphoglycerate + UDP-alpha-D-glucose = (2R)-2-O-(alpha-D-glucopyranosyl)-3-phospho-glycerate + UDP + H(+). The catalysed reaction is GDP-D-glucose + (2R)-3-phosphoglycerate = (2R)-2-O-(alpha-D-glucopyranosyl)-3-phospho-glycerate + GDP + H(+). Involved in the biosynthesis of 6-O-methylglucose lipopolysaccarides (MGLPs). Catalyzes the transfer of the glucose moiety from UDP-alpha-D-glucose (UDP-Glc) to the position 2 of 3-phospho-D-glycerate (3-PGA) to form glucosyl-3-phosphoglycerate (GPG). To a lesser extent can also use GDP-Glc but not UDP-Gal or UDP-GlcNAc as the sugar donor. The chain is Glucosyl-3-phosphoglycerate synthase from Mycolicibacterium paratuberculosis (strain ATCC BAA-968 / K-10) (Mycobacterium paratuberculosis).